Reading from the N-terminus, the 1023-residue chain is Solute carrier family 12 member 3 (1023 aa).

At 1–134 (MELPGDGVHL…EPPPEPPRFG (134 aa)) the chain is on the cytoplasmic side. Positions 91–131 (DPEQDDFKPPMYEETAGERMGGGDSSEEEEEEHKEPPPEPP) are disordered. Residues 135–164 (WVQGVMIRCMLNIWGVILYLRLPWITAQAG) traverse the membrane as a discontinuously helical segment. 2 residues coordinate Na(+): Leu145 and Trp148. Residues 165–186 (IGLTWVIILLSSFITGITGLST) traverse the membrane as a helical segment. Residues 187-217 (SAIATNGKVKGGGTYFLISRSLGPELGGSIG) lie on the Cytoplasmic side of the membrane. Residues 218–240 (LIFAFANAVAVAMHTVGFAETVT) traverse the membrane as a helical segment. Residues 241–252 (DLMRENGVVMVD) are Extracellular-facing. 2 consecutive transmembrane segments (helical) span residues 253–277 (PIND…AGME) and 278–300 (WESK…YIVG). Residues 301-335 (TIIPASPQKQAKGFFSYKAEIFAANFVPGWRGKEG) are Extracellular-facing. A discontinuously helical membrane pass occupies residues 336-357 (SFFGMFSIFFPSATGILAGANI). The chloride site is built by Gly350, Ile351, and Leu352. Over 358–368 (SGDLKDPTVAI) the chain is Cytoplasmic. The helical transmembrane segment at 369–390 (PRGTLMAIFWTTISYLIISATI) threads the bilayer. The Extracellular portion of the chain corresponds to 391-452 (GACVVRDASG…YQSMSLVSAF (62 aa)). N-linked (GlcNAc...) asparagine glycans are attached at residues Asn403 and Asn414. 2 disulfide bridges follow: Cys415-Cys420 and Cys429-Cys435. Asn432 is a glycosylation site (N-linked (GlcNAc...) asparagine). Residues 453–476 (APLISAGIFGATLSSALACLVSAP) form a helical membrane-spanning segment. 3 residues coordinate Na(+): Ala463, Ser466, and Ser467. Residues 477-506 (KVFQCLCKDQLYPLIGFFGKGYGKNAEPLR) are Cytoplasmic-facing. Residues 507 to 521 (AYLLTYVIAVCFVLI) form a helical membrane-spanning segment. The Extracellular portion of the chain corresponds to 522 to 526 (AELNT). Residues 527-543 (IAPIISNFFLCSYALIN) form a helical membrane-spanning segment. Residue Tyr539 coordinates chloride. The Cytoplasmic segment spans residues 544 to 566 (FSCFHASVTNSPGWRPSFRFYSK). The next 2 membrane-spanning stretches (helical) occupy residues 567-586 (WLSL…LTWW) and 587-598 (AALIAFGVVFFL). The Cytoplasmic portion of the chain corresponds to 599–1023 (LGYTLYKKPA…QENVLTFYCQ (425 aa)). The tract at residues 614-629 (SVQASSYSMALNQCVG) is scissor helix. ATP contacts are provided by Leu647, Arg654, Val676, Gly733, and Leu772.

This sequence belongs to the SLC12A transporter family. In terms of assembly, homodimer; adopts a domain-swap conformation at the scissor helices connecting the transmembrane domain and C-terminal domain. As to expression, expressed in urinary bladder, intestine, ovary, skeletal muscle, eye, brain, and kidney.

The protein localises to the cell membrane. The catalysed reaction is chloride(out) + Na(+)(out) = chloride(in) + Na(+)(in). With respect to regulation, inhibited by thiazide-type diuretics including polythiazide, metolazone, cyclothiazide, hydrochlorothiazide and chlorthalidone. Thiazide drugs, specifically inhibit SLC12A3/NCC transporter activity by competing with chloride for binding. Its function is as follows. Electroneutral sodium and chloride ion cotransporter, with a coupling ratio 1 Na(+):1 Cl(-). Mediates sodium and chloride reabsorption. This Pseudopleuronectes americanus (Winter flounder) protein is Solute carrier family 12 member 3 (slc12a3).